The sequence spans 486 residues: Malonate-semialdehyde dehydrogenase (486 aa).

5 residues coordinate NAD(+): Phe154, Lys178, Glu181, Arg182, and Ser231. Cys286 (nucleophile) is an active-site residue. Residue Glu386 coordinates NAD(+).

Belongs to the aldehyde dehydrogenase family. IolA subfamily. In terms of assembly, homotetramer.

The catalysed reaction is 3-oxopropanoate + NAD(+) + CoA + H2O = hydrogencarbonate + acetyl-CoA + NADH + H(+). It catalyses the reaction 2-methyl-3-oxopropanoate + NAD(+) + CoA + H2O = propanoyl-CoA + hydrogencarbonate + NADH + H(+). The protein operates within polyol metabolism; myo-inositol degradation into acetyl-CoA; acetyl-CoA from myo-inositol: step 7/7. Functionally, catalyzes the oxidation of malonate semialdehyde (MSA) and methylmalonate semialdehyde (MMSA) into acetyl-CoA and propanoyl-CoA, respectively. Is involved in a myo-inositol catabolic pathway. Bicarbonate, and not CO2, is the end-product of the enzymatic reaction. This is Malonate-semialdehyde dehydrogenase from Bacillus cereus (strain ATCC 14579 / DSM 31 / CCUG 7414 / JCM 2152 / NBRC 15305 / NCIMB 9373 / NCTC 2599 / NRRL B-3711).